The following is a 346-amino-acid chain: S-adenosylmethionine:tRNA ribosyltransferase-isomerase (346 aa).

This sequence belongs to the QueA family. Monomer.

The protein resides in the cytoplasm. The enzyme catalyses 7-aminomethyl-7-carbaguanosine(34) in tRNA + S-adenosyl-L-methionine = epoxyqueuosine(34) in tRNA + adenine + L-methionine + 2 H(+). The protein operates within tRNA modification; tRNA-queuosine biosynthesis. In terms of biological role, transfers and isomerizes the ribose moiety from AdoMet to the 7-aminomethyl group of 7-deazaguanine (preQ1-tRNA) to give epoxyqueuosine (oQ-tRNA). The chain is S-adenosylmethionine:tRNA ribosyltransferase-isomerase from Chloroherpeton thalassium (strain ATCC 35110 / GB-78).